The primary structure comprises 932 residues: uncharacterized protein (932 aa).

Disordered regions lie at residues asparagine 26–threonine 120, methionine 158–lysine 289, asparagine 304–aspartate 617, glutamine 635–valine 720, and serine 802–glutamate 863. Composition is skewed to low complexity over residues asparagine 41–serine 105 and asparagine 163–asparagine 241. Residues threonine 242–proline 253 show a composition bias toward polar residues. A compositionally biased stretch (acidic residues) spans serine 265–glutamate 285. Over residues asparagine 304–asparagine 475 the composition is skewed to low complexity. Composition is skewed to polar residues over residues glutamate 476–serine 492 and aspartate 527–glutamine 540. Over residues serine 548 to glycine 590 the composition is skewed to low complexity. Positions glycine 606–aspartate 617 are enriched in basic and acidic residues. 3 stretches are compositionally biased toward low complexity: residues glutamine 635 to serine 666, serine 696 to serine 707, and asparagine 813 to serine 853. Basic and acidic residues predominate over residues glutamate 854–glutamate 863.

This is an uncharacterized protein from Dictyostelium discoideum (Social amoeba).